The primary structure comprises 483 residues: Probable apyrase 3 (483 aa).

Over 1 to 29 (MTPETDALKVQILPKHQSLPYTVTKAKSK) the chain is Cytoplasmic. A helical; Signal-anchor for type II membrane protein membrane pass occupies residues 30–50 (SLILLVVVSVTITLGLLLYVF). Over 51 to 483 (NSNSVISSGS…NGKSRKYLGF (433 aa)) the chain is Extracellular. 72-82 (VLIDAGSSGTR) is a binding site for ATP. The active-site Proton acceptor is the glutamate 195. Position 219-229 (219-229 (GIVELGGASAQ)) interacts with ATP. N-linked (GlcNAc...) asparagine glycans are attached at residues asparagine 250, asparagine 281, asparagine 305, and asparagine 326.

This sequence belongs to the GDA1/CD39 NTPase family. It depends on Ca(2+) as a cofactor. In terms of tissue distribution, expressed in the initiation zone of lateral root and in the lateral root tip, the adaxial junction of lateral shoots with the stems, and in the abscission zone of flower organs. Not expressed in the rosette leaves.

The protein resides in the membrane. The catalysed reaction is a ribonucleoside 5'-triphosphate + 2 H2O = a ribonucleoside 5'-phosphate + 2 phosphate + 2 H(+). In terms of biological role, catalyzes the hydrolysis of phosphoanhydride bonds of nucleoside tri- and di-phosphates. The polypeptide is Probable apyrase 3 (APY3) (Arabidopsis thaliana (Mouse-ear cress)).